The following is a 186-amino-acid chain: Putative adenylate kinase (186 aa).

Residues Gly-10, Gly-12, Lys-13, Thr-14, and Ser-15 each contribute to the ATP site. The interval 30 to 53 (HLNELIKEEHLYTEVDEKRDSVVA) is NMP. Positions 108–118 (KRGYSEEKVNE) are LID. Arg-109 lines the ATP pocket.

Belongs to the adenylate kinase family. AK6 subfamily. In terms of assembly, interacts with uS11. Not a structural component of 40S pre-ribosomes, but transiently interacts with them by binding to uS11.

It carries out the reaction AMP + ATP = 2 ADP. The catalysed reaction is ATP + H2O = ADP + phosphate + H(+). Its function is as follows. Broad-specificity nucleoside monophosphate (NMP) kinase that catalyzes the reversible transfer of the terminal phosphate group between nucleoside triphosphates and monophosphates. Also has ATPase activity. Involved in the late maturation steps of the 30S ribosomal particles, specifically 16S rRNA maturation. While NMP activity is not required for ribosome maturation, ATPase activity is. Associates transiently with small ribosomal subunit protein uS11. ATP hydrolysis breaks the interaction with uS11. May temporarily remove uS11 from the ribosome to enable a conformational change of the ribosomal RNA that is needed for the final maturation step of the small ribosomal subunit. This is Putative adenylate kinase from Methanosarcina acetivorans (strain ATCC 35395 / DSM 2834 / JCM 12185 / C2A).